Reading from the N-terminus, the 239-residue chain is MGLIWLLLLSLLEPGWPAAGPGARLRRDAGGRGGVYEHLGGAPRRRKLYCATKYHLQLHPSGRVNGSLENSAYSILEITAVEVGIVAIRGLFSGRYLAMNKRGRLYASEHYSAECEFVERIHELGYNTYASRLYRTVSSTPGARRQPSAERLWYVSVNGKGRPRRGFKTRRTQKSSLFLPRVLDHRDHEMVRQLQSGLPRPPGKGVQPRRRRQKQSPDNLEPSHVQASRLGSQLEASAH.

A signal peptide spans methionine 1–proline 17. An N-linked (GlcNAc...) asparagine glycan is attached at asparagine 65. The tract at residues glutamine 193–histidine 239 is disordered. A compositionally biased stretch (polar residues) spans valine 225–histidine 239.

The protein belongs to the heparin-binding growth factors family. Interacts with FGFR1 and FGFR2. Affinity between fibroblast growth factors (FGFs) and their receptors is increased by heparan sulfate glycosaminoglycans that function as coreceptors.

It localises to the secreted. Plays an important role in the regulation of embryonic development, cell proliferation, and cell differentiation. Required for normal ear development. This Homo sapiens (Human) protein is Fibroblast growth factor 3 (FGF3).